The following is an 88-amino-acid chain: Acyl carrier protein (88 aa).

One can recognise a Carrier domain in the interval 4–79 (DSVPAKVMEI…AAVDYIQNKM (76 aa)). The residue at position 39 (serine 39) is an O-(pantetheine 4'-phosphoryl)serine.

This sequence belongs to the acyl carrier protein (ACP) family. In terms of processing, 4'-phosphopantetheine is transferred from CoA to a specific serine of apo-ACP by AcpS. This modification is essential for activity because fatty acids are bound in thioester linkage to the sulfhydryl of the prosthetic group.

It localises to the cytoplasm. Its pathway is lipid metabolism; fatty acid biosynthesis. In terms of biological role, carrier of the growing fatty acid chain in fatty acid biosynthesis. The protein is Acyl carrier protein of Trichodesmium erythraeum (strain IMS101).